Consider the following 872-residue polypeptide: Metabotropic glutamate receptor 2 (872 aa).

An N-terminal signal peptide occupies residues 1–18 (MGSLLALLALLLLWGAVA). Topologically, residues 19–567 (EGPAKKVLTL…QEYIRWGDAW (549 aa)) are extracellular. A disulfide bond links cysteine 50 and cysteine 92. Arginine 57, arginine 61, serine 145, alanine 166, and threonine 168 together coordinate L-glutamate. Asparagine 203 and asparagine 286 each carry an N-linked (GlcNAc...) asparagine glycan. Intrachain disulfides connect cysteine 234–cysteine 518, cysteine 355–cysteine 362, cysteine 400–cysteine 407, cysteine 500–cysteine 519, cysteine 504–cysteine 522, cysteine 525–cysteine 537, and cysteine 540–cysteine 553. Aspartate 295 is a binding site for L-glutamate. N-linked (GlcNAc...) asparagine glycosylation occurs at asparagine 338. Lysine 377 provides a ligand contact to L-glutamate. N-linked (GlcNAc...) asparagine glycosylation is present at asparagine 402. N-linked (GlcNAc...) asparagine glycosylation occurs at asparagine 547. Residues 568–590 (AVGPVTIACLGALATLFVLGVFV) traverse the membrane as a helical segment. The Cytoplasmic segment spans residues 591-604 (RHNATPVVKASGRE). The helical transmembrane segment at 605 to 625 (LCYILLGGVFLCYCMTFIFIA) threads the bilayer. The Extracellular segment spans residues 626–636 (KPSTAVCTLRR). An intrachain disulfide couples cysteine 632 to cysteine 721. A helical transmembrane segment spans residues 637–655 (LGLGTAFSVCYSALLTKTN). Residues 656–679 (RIARIFGGAREGAQRPRFISPASQ) lie on the Cytoplasmic side of the membrane. An important for interaction with HTR2A region spans residues 677 to 685 (ASQVAICLA). The chain crosses the membrane as a helical span at residues 680–700 (VAICLALISGQLLIVVAWLVV). Over 701-725 (EAPGTGKETAPERREVVTLRCNHRD) the chain is Extracellular. The helical transmembrane segment at 726–747 (ASMLGSLAYNVLLIALCTLYAF) threads the bilayer. Residues 748–760 (KTRKCPENFNEAK) are Cytoplasmic-facing. Residues 761–783 (FIGFTMYTTCIIWLAFLPIFYVT) form a helical membrane-spanning segment. The Extracellular segment spans residues 784–793 (SSDYRVQTTT). Residues 794–819 (MCVSVSLSGSVVLGCLFAPKLHIILF) traverse the membrane as a helical segment. At 820-872 (QPQKNVVSHRAPTSRFGSAAARASSSLGQGSGSQFVPTVCNGREVVDSTTSSL) the chain is on the cytoplasmic side.

Belongs to the G-protein coupled receptor 3 family. Forms heterodimers with GRM3 or GRM4. Interacts with TAMALIN. Interacts with HTR2A. In terms of assembly, (Microbial infection) Interacts with H5N6 virus protein HA. As to quaternary structure, (Microbial infection) Interacts with rabies virus protein G. (Microbial infection) Interacts with SARS-CoV-2 virus spike protein S. In terms of tissue distribution, detected in brain cortex (at protein level). Widely expressed in different regions of the adult brain as well as in fetal brain.

The protein resides in the cell membrane. Its subcellular location is the synapse. It localises to the cell projection. The protein localises to the dendrite. In terms of biological role, dimeric G protein-coupled receptor which is activated by the excitatory neurotransmitter L-glutamate. Plays critical roles in modulating synaptic transmission and neuronal excitability. Upon activation by glutamate, inhibits presynaptic calcium channels, reducing further glutamate release and dampening excitatory signaling. Mechanistically, ligand binding causes a conformation change that triggers signaling via guanine nucleotide-binding proteins (G proteins) and modulates the activity of down-stream effectors, such as adenylate cyclase. May mediate suppression of neurotransmission or may be involved in synaptogenesis or synaptic stabilization. Functionally, (Microbial infection) Plays an important role in influenza virus internalization. Its function is as follows. (Microbial infection) Acts as a host entry factor for rabies virus that hijacks the endocytosis of GRM2 to enter cells. (Microbial infection) Acts as a host entry factor for SARS-CoV-2 that hijacks the endocytosis of GRM2 to enter cells. The chain is Metabotropic glutamate receptor 2 from Homo sapiens (Human).